Here is a 535-residue protein sequence, read N- to C-terminus: EH domain-containing protein 3 (535 aa).

M1 is subject to N-acetylmethionine. Positions 55–286 constitute a Dynamin-type G domain; that stretch reads FDNKPMVLLV…DLFRDIQSLP (232 aa). A G1 motif region spans residues 65 to 72; the sequence is GQYSTGKT. Position 65 to 72 (65 to 72) interacts with ATP; it reads GQYSTGKT. The segment at 91–92 is G2 motif; it reads EP. A G3 motif region spans residues 153-156; the sequence is DTPG. Residues 198 to 227 adopt a coiled-coil conformation; the sequence is DEFSEVIKALKNHEDKMRVVLNKADQIETQ. Residues 219-222 are G4 motif; the sequence is NKAD. ATP is bound at residue K220. Residue I243 is a region of interest, G5 motif. W258 lines the ATP pocket. K315 participates in a covalent cross-link: Glycyl lysine isopeptide (Lys-Gly) (interchain with G-Cter in SUMO). S349 and S456 each carry phosphoserine. The region spanning 444-532 is the EH domain; that stretch reads DKPMYDEIFY…AHLLPPSKRK (89 aa). Residues 476 to 511 form the EF-hand domain; it reads LPNSVLGKIWKLADIDKDGMLDDEEFALANHLIKVK. Positions 489, 491, 493, 495, and 500 each coordinate Ca(2+). K511 is covalently cross-linked (Glycyl lysine isopeptide (Lys-Gly) (interchain with G-Cter in SUMO)).

This sequence belongs to the TRAFAC class dynamin-like GTPase superfamily. Dynamin/Fzo/YdjA family. EHD subfamily. As to quaternary structure, homooligomer. Heterooligomer with EHD1. Heterooligomer with EHD2 and EHD4; ATP-binding is required for heterooligomerization. Interacts with PACSIN1. Interacts with PACSIN2. Interacts (via EH domain) with MICALL1. Interacts (via EH domain) with RAB11FIP2. Interacts with ANK2. Interacts with CACNA1GG and CACNA1H. In terms of tissue distribution, strong expression seen in the kidney, brain and liver. In the kidney, expressed exclusively by glomerular endothelial cells; at protein level. Expressed in skeletal muscle neuromuscular junction perisynaptic region; at protein level.

It localises to the recycling endosome membrane. Its subcellular location is the cell membrane. The protein localises to the cell projection. The protein resides in the cilium membrane. It is found in the cytoplasmic vesicle. Its function is as follows. ATP- and membrane-binding protein that controls membrane reorganization/tubulation upon ATP hydrolysis. In vitro causes tubulation of endocytic membranes. Binding to phosphatidic acid induces its membrane tubulation activity. Plays a role in endocytic transport. Involved in early endosome to recycling endosome compartment (ERC), retrograde early endosome to Golgi, and endosome to plasma membrane (rapid recycling) protein transport. Involved in the regulation of Golgi maintenance and morphology. Involved in the recycling of internalized D1 dopamine receptor. Plays a role in cardiac protein trafficking probably implicating ANK2. Involved in the ventricular membrane targeting of SLC8A1 and CACNA1C and probably the atrial membrane localization of CACNA1GG and CACNA1H implicated in the regulation of atrial myocyte excitability and cardiac conduction. In conjunction with EHD4 may be involved in endocytic trafficking of KDR/VEGFR2 implicated in control of glomerular function. Involved in the rapid recycling of integrin beta-3 implicated in cell adhesion maintenance. Involved in the unidirectional retrograde dendritic transport of endocytosed BACE1 and in efficient sorting of BACE1 to axons implicating a function in neuronal APP processing. Plays a role in the formation of the ciliary vesicle, an early step in cilium biogenesis; possibly sharing redundant functions with Ehd1. The protein is EH domain-containing protein 3 of Mus musculus (Mouse).